A 199-amino-acid chain; its full sequence is uncharacterized protein (199 aa).

Positions N38 to N169 constitute a Nudix hydrolase domain. The Nudix box signature appears at G76 to A98. Mg(2+)-binding residues include E92 and E96.

The protein belongs to the Nudix hydrolase family. PCD1 subfamily. Mn(2+) serves as cofactor. It depends on Mg(2+) as a cofactor.

Probably mediates the hydrolysis of some nucleoside diphosphate derivatives. This is an uncharacterized protein from Yersinia pseudotuberculosis serotype I (strain IP32953).